Reading from the N-terminus, the 86-residue chain is MQDRGDKPERRSRKGRRPRRRICFFCVDKIETVDYKEVGKLRKYITERGKILPRRVSGCCAKHQRQLTNAIKRARHVALLPFTVNE.

The protein belongs to the bacterial ribosomal protein bS18 family. Part of the 30S ribosomal subunit. Forms a tight heterodimer with protein bS6.

Functionally, binds as a heterodimer with protein bS6 to the central domain of the 16S rRNA, where it helps stabilize the platform of the 30S subunit. This Heliobacterium modesticaldum (strain ATCC 51547 / Ice1) protein is Small ribosomal subunit protein bS18.